Reading from the N-terminus, the 414-residue chain is Protein RecA (414 aa).

78–85 (GPESSGKT) lines the ATP pocket. The span at 361–384 (QEKAVEALKKEEGSKEDALTGNKD) shows a compositional bias: basic and acidic residues. Residues 361 to 414 (QEKAVEALKKEEGSKEDALTGNKDETDDSAQKNSAASKAKRAEVVGLPADDSLF) form a disordered region.

This sequence belongs to the RecA family.

The protein resides in the cytoplasm. Functionally, can catalyze the hydrolysis of ATP in the presence of single-stranded DNA, the ATP-dependent uptake of single-stranded DNA by duplex DNA, and the ATP-dependent hybridization of homologous single-stranded DNAs. It interacts with LexA causing its activation and leading to its autocatalytic cleavage. The chain is Protein RecA from Treponema denticola (strain ATCC 35405 / DSM 14222 / CIP 103919 / JCM 8153 / KCTC 15104).